A 978-amino-acid polypeptide reads, in one-letter code: Transcription factor MYCGRDRAFT_87993 (978 aa).

2 consecutive C2H2-type zinc fingers follow at residues 2–24 and 30–52; these read VFCT…ILTH and FKCF…YTVH. Positions 79–105 form a DNA-binding region, zn(2)-C6 fungal-type; the sequence is CSNCAKTKTKCDKKFPCSRCAGRNLRC. 2 disordered regions span residues 113–231 and 426–445; these read ASKN…SPRF and THRE…PSGA. Low complexity predominate over residues 152–165; that stretch reads SSSPSSQKSGTPIS. Polar residues predominate over residues 432-445; it reads GTSNGSHSPNPSGA.

It localises to the nucleus. In terms of biological role, transcription factor; part of the gene cluster 29 that mediates the biosynthesis of dihydroxynaphthalene (DHN)-melanin, a bluish-green pigment forming a dark layer in the conidial wall that protects the conidia from UV radiations. This Zymoseptoria tritici (strain CBS 115943 / IPO323) (Speckled leaf blotch fungus) protein is Transcription factor MYCGRDRAFT_87993.